The primary structure comprises 150 residues: AN1-type zinc finger protein TMC1 (150 aa).

Residues 1–82 form a disordered region; it reads MSDINEIEIP…TKKTTKKKKK (82 aa). At Ser-2 the chain carries N-acetylserine. A compositionally biased stretch (basic and acidic residues) spans 23-33; sequence DPMHEIEDKST. Phosphoserine is present on residues Ser-43 and Ser-54. The segment covering 53–70 has biased composition (low complexity); it reads NSRSSSNSSVTSTGQSSR. The segment covering 71–82 has biased composition (basic residues); sequence RVTKKTTKKKKK. The segment at 79–128 adopts an AN1-type zinc-finger fold; it reads KKKKNACYFDTCSSAASKFIGDCNFCKGHFCSKHRLMENHACNGLTSCKE. Cys-85, Cys-90, Cys-101, Cys-104, Cys-109, His-112, His-118, and Cys-120 together coordinate Zn(2+).

It localises to the nucleus. In terms of biological role, may have a role in protecting cells from metalloid-induced proteotoxicity. The polypeptide is AN1-type zinc finger protein TMC1 (Saccharomyces cerevisiae (strain ATCC 204508 / S288c) (Baker's yeast)).